We begin with the raw amino-acid sequence, 901 residues long: Translation initiation factor IF-2 (901 aa).

The interval 48–313 (HLNREHGGSS…SSLQQGFTKP (266 aa)) is disordered. The span at 68–82 (STLSVPGTGGKSKSV) shows a compositional bias: polar residues. The span at 106–226 (ALAKREAEEQ…RMAEANEGKW (121 aa)) shows a compositional bias: basic and acidic residues. Basic residues predominate over residues 263–277 (ARGRGGKAAKQKKGS). Residues 278-291 (KLSESKADREEARA) show a composition bias toward basic and acidic residues. Residues 400–569 (PRAPVVTIMG…LLQAEVLELK (170 aa)) enclose the tr-type G domain. The interval 409–416 (GHVDHGKT) is G1. Residue 409 to 416 (GHVDHGKT) participates in GTP binding. Residues 434-438 (GITQH) are G2. Residues 455–458 (DTPG) are G3. GTP is bound by residues 455-459 (DTPGH) and 509-512 (NKID). The interval 509 to 512 (NKID) is G4. Positions 545–547 (SAK) are G5.

Belongs to the TRAFAC class translation factor GTPase superfamily. Classic translation factor GTPase family. IF-2 subfamily.

The protein localises to the cytoplasm. Its function is as follows. One of the essential components for the initiation of protein synthesis. Protects formylmethionyl-tRNA from spontaneous hydrolysis and promotes its binding to the 30S ribosomal subunits. Also involved in the hydrolysis of GTP during the formation of the 70S ribosomal complex. The sequence is that of Translation initiation factor IF-2 from Edwardsiella ictaluri (strain 93-146).